A 217-amino-acid chain; its full sequence is Large ribosomal subunit protein uL4 (217 aa).

A disordered region spans residues 42–100 (RAAARQGTHSTKTRGDVSGGGRKPYRQKGTGRARQGSTRAPQFTGGGVVHGPKPRDYSQ).

Belongs to the universal ribosomal protein uL4 family. Part of the 50S ribosomal subunit.

Its function is as follows. One of the primary rRNA binding proteins, this protein initially binds near the 5'-end of the 23S rRNA. It is important during the early stages of 50S assembly. It makes multiple contacts with different domains of the 23S rRNA in the assembled 50S subunit and ribosome. Functionally, forms part of the polypeptide exit tunnel. This is Large ribosomal subunit protein uL4 from Mycobacterium avium (strain 104).